The sequence spans 690 residues: Protease 2 (690 aa).

Residues S534, D619, and H654 each act as charge relay system in the active site.

The protein belongs to the peptidase S9A family.

The enzyme catalyses Hydrolysis of -Arg-|-Xaa- and -Lys-|-Xaa- bonds in oligopeptides, even when P1' residue is proline.. Its function is as follows. Cleaves peptide bonds on the C-terminal side of lysyl and argininyl residues. The sequence is that of Protease 2 (ptrB) from Moraxella lacunata.